Here is a 595-residue protein sequence, read N- to C-terminus: Aspartate--tRNA(Asp/Asn) ligase (595 aa).

Glu-175 provides a ligand contact to L-aspartate. The aspartate stretch occupies residues 199-202 (QQFK). Residues Arg-221 and His-451 each coordinate L-aspartate. An ATP-binding site is contributed by 221–223 (RDE). Glu-485 contacts ATP. Position 492 (Arg-492) interacts with L-aspartate. 537–540 (GVDR) is an ATP binding site.

The protein belongs to the class-II aminoacyl-tRNA synthetase family. Type 1 subfamily. Homodimer.

It localises to the cytoplasm. The catalysed reaction is tRNA(Asx) + L-aspartate + ATP = L-aspartyl-tRNA(Asx) + AMP + diphosphate. Its function is as follows. Aspartyl-tRNA synthetase with relaxed tRNA specificity since it is able to aspartylate not only its cognate tRNA(Asp) but also tRNA(Asn). Reaction proceeds in two steps: L-aspartate is first activated by ATP to form Asp-AMP and then transferred to the acceptor end of tRNA(Asp/Asn). The sequence is that of Aspartate--tRNA(Asp/Asn) ligase from Acidiphilium cryptum (strain JF-5).